Consider the following 185-residue polypeptide: Pyridoxal 5'-phosphate synthase subunit PdxT (185 aa).

Position 46-48 (46-48 (GES)) interacts with L-glutamine. Residue Cys75 is the Nucleophile of the active site. L-glutamine is bound by residues Arg101 and 129-130 (IR). Residues His165 and Glu167 each act as charge relay system in the active site.

The protein belongs to the glutaminase PdxT/SNO family. In terms of assembly, in the presence of PdxS, forms a dodecamer of heterodimers. Only shows activity in the heterodimer.

It carries out the reaction aldehydo-D-ribose 5-phosphate + D-glyceraldehyde 3-phosphate + L-glutamine = pyridoxal 5'-phosphate + L-glutamate + phosphate + 3 H2O + H(+). The catalysed reaction is L-glutamine + H2O = L-glutamate + NH4(+). Its pathway is cofactor biosynthesis; pyridoxal 5'-phosphate biosynthesis. Functionally, catalyzes the hydrolysis of glutamine to glutamate and ammonia as part of the biosynthesis of pyridoxal 5'-phosphate. The resulting ammonia molecule is channeled to the active site of PdxS. In Staphylococcus epidermidis (strain ATCC 12228 / FDA PCI 1200), this protein is Pyridoxal 5'-phosphate synthase subunit PdxT.